Reading from the N-terminus, the 299-residue chain is MGWTDSLPAGSAEQVSALLDRATEFDGKAPVSEQGRHAVAGRGAARHFVELDGDTVVGYAQLQAGSDEHPDMAELVVDPQARRRGIGTRLAAAVFDEGRPGTRVWAHGNVDAAVEFAKSLDLVSVRELLQLRRPLDAPQLPEIVVPEGVTMRTYRGPEDDSEILRVNNAAFSWHPEQGGWTQAEIDERTAEGWFDPAGLFMAFADTDPDTLLGFHWTKVHAPEGDDPELGEVYVVGIDPAAQGRGLGRVLTLAGMHYLRDRGLGTVLLYVEGDNTAALHTYERLGFDRFHVDMAYARAL.

2 consecutive N-acetyltransferase domains span residues Met-1–Gly-156 and Val-149–Leu-299. Glu-33 is a 1D-myo-inositol 2-(L-cysteinylamino)-2-deoxy-alpha-D-glucopyranoside binding site. Residues Leu-75–Val-77 and Arg-83–Thr-88 each bind acetyl-CoA. 1D-myo-inositol 2-(L-cysteinylamino)-2-deoxy-alpha-D-glucopyranoside is bound by residues Glu-176, Lys-218, and Glu-231. Residues Val-235–Ile-237 and Gln-242–Arg-248 contribute to the acetyl-CoA site. 1D-myo-inositol 2-(L-cysteinylamino)-2-deoxy-alpha-D-glucopyranoside is bound at residue Tyr-269. Asn-274–His-279 serves as a coordination point for acetyl-CoA.

Belongs to the acetyltransferase family. MshD subfamily. As to quaternary structure, monomer.

The catalysed reaction is 1D-myo-inositol 2-(L-cysteinylamino)-2-deoxy-alpha-D-glucopyranoside + acetyl-CoA = mycothiol + CoA + H(+). In terms of biological role, catalyzes the transfer of acetyl from acetyl-CoA to desacetylmycothiol (Cys-GlcN-Ins) to form mycothiol. The polypeptide is Mycothiol acetyltransferase (Rhodococcus erythropolis (strain PR4 / NBRC 100887)).